Here is a 153-residue protein sequence, read N- to C-terminus: MAL-like protein (153 aa).

4 consecutive transmembrane segments (helical) span residues Leu22 to Trp42, Val59 to Phe79, Gly97 to Ser117, and Ala131 to Tyr151. The 132-residue stretch at Leu22–His153 folds into the MARVEL domain.

This sequence belongs to the MAL family.

Its subcellular location is the membrane. The chain is MAL-like protein (MALL) from Homo sapiens (Human).